We begin with the raw amino-acid sequence, 246 residues long: Probable transcriptional regulatory protein Rmag_0394 (246 aa).

Belongs to the TACO1 family.

It is found in the cytoplasm. The protein is Probable transcriptional regulatory protein Rmag_0394 of Ruthia magnifica subsp. Calyptogena magnifica.